We begin with the raw amino-acid sequence, 106 residues long: Nucleoid-associated protein Noc_2594 (106 aa).

2 disordered regions span residues 1–20 (MKGGLGNLMKQAQQLQSNME) and 85–106 (QSKEKMSSMTSGMLPPGFKLPL). Positions 10–20 (KQAQQLQSNME) are enriched in polar residues.

Belongs to the YbaB/EbfC family. As to quaternary structure, homodimer.

Its subcellular location is the cytoplasm. It localises to the nucleoid. In terms of biological role, binds to DNA and alters its conformation. May be involved in regulation of gene expression, nucleoid organization and DNA protection. This Nitrosococcus oceani (strain ATCC 19707 / BCRC 17464 / JCM 30415 / NCIMB 11848 / C-107) protein is Nucleoid-associated protein Noc_2594.